A 443-amino-acid chain; its full sequence is Enolase (443 aa).

Glutamine 167 provides a ligand contact to (2R)-2-phosphoglycerate. The active-site Proton donor is glutamate 209. Mg(2+)-binding residues include aspartate 246, glutamate 291, and aspartate 318. Lysine 343, arginine 372, serine 373, and lysine 394 together coordinate (2R)-2-phosphoglycerate. Lysine 343 functions as the Proton acceptor in the catalytic mechanism.

Belongs to the enolase family. As to quaternary structure, component of the RNA degradosome, a multiprotein complex involved in RNA processing and mRNA degradation. Mg(2+) is required as a cofactor.

The protein localises to the cytoplasm. The protein resides in the secreted. It is found in the cell surface. It catalyses the reaction (2R)-2-phosphoglycerate = phosphoenolpyruvate + H2O. The protein operates within carbohydrate degradation; glycolysis; pyruvate from D-glyceraldehyde 3-phosphate: step 4/5. Catalyzes the reversible conversion of 2-phosphoglycerate (2-PG) into phosphoenolpyruvate (PEP). It is essential for the degradation of carbohydrates via glycolysis. The sequence is that of Enolase from Wigglesworthia glossinidia brevipalpis.